Consider the following 921-residue polypeptide: AdoMet-dependent rRNA methyltransferase SPB1 (921 aa).

S-adenosyl-L-methionine contacts are provided by Gly-58, Trp-60, Asp-78, Asp-94, and Asp-119. The active-site Proton acceptor is the Lys-159. A coiled-coil region spans residues Val-367–Thr-414. Disordered stretches follow at residues Ala-448 to Thr-476, Glu-491 to Leu-604, Glu-635 to Lys-713, Leu-814 to Lys-835, and Arg-866 to Asn-921. A compositionally biased stretch (basic and acidic residues) spans Glu-491 to Lys-522. 4 stretches are compositionally biased toward acidic residues: residues Asp-523–Gly-542, Glu-555–Glu-568, Glu-635–Glu-684, and Asp-697–Glu-708. A coiled-coil region spans residues Ile-796–Lys-835. Over residues Leu-814–Thr-823 the composition is skewed to basic and acidic residues. Over residues Leu-868–Tyr-879 the composition is skewed to basic residues. The span at Lys-880–Ala-892 shows a compositional bias: basic and acidic residues.

Belongs to the class I-like SAM-binding methyltransferase superfamily. RNA methyltransferase RlmE family. SPB1 subfamily. Component of the nucleolar and nucleoplasmic pre-60S ribosomal particle.

The protein resides in the nucleus. Its subcellular location is the nucleolus. The enzyme catalyses a ribonucleotide in rRNA + S-adenosyl-L-methionine = a 2'-O-methylribonucleotide in rRNA + S-adenosyl-L-homocysteine + H(+). Required for proper assembly of pre-ribosomal particles during the biogenesis of the 60S ribosomal subunit. The sequence is that of AdoMet-dependent rRNA methyltransferase SPB1 from Mycosarcoma maydis (Corn smut fungus).